A 91-amino-acid polypeptide reads, in one-letter code: UPF0250 protein NMA1380 (91 aa).

It belongs to the UPF0250 family.

This is UPF0250 protein NMA1380 from Neisseria meningitidis serogroup A / serotype 4A (strain DSM 15465 / Z2491).